Consider the following 120-residue polypeptide: Large ribosomal subunit protein uL18 (120 aa).

The protein belongs to the universal ribosomal protein uL18 family. Part of the 50S ribosomal subunit; part of the 5S rRNA/L5/L18/L25 subcomplex. Contacts the 5S and 23S rRNAs.

This is one of the proteins that bind and probably mediate the attachment of the 5S RNA into the large ribosomal subunit, where it forms part of the central protuberance. In Methylorubrum extorquens (strain CM4 / NCIMB 13688) (Methylobacterium extorquens), this protein is Large ribosomal subunit protein uL18.